A 971-amino-acid chain; its full sequence is Kinesin-like protein KIN-14C (971 aa).

Residues 14 to 119 (ANRRAEVIDW…CLLALKDNVA (106 aa)) enclose the Calponin-homology (CH) domain. Positions 272–357 (IKALETLVNG…QMETKARQME (86 aa)) form a coiled coil. The 328-residue stretch at 472–799 (NIRVYCRVRP…LKFAERVSGV (328 aa)) folds into the Kinesin motor domain. Position 556–563 (556–563 (GQTGSGKT)) interacts with ATP. Residues 809–844 (EGKDIKELLEQVASLKDTIARKDMEIEQLQLLKSKS) are a coiled coil. The span at 839–881 (LLKSKSPNSMTDRNGSNLLRQSTSSTGLSSLPVASQQNQQLSG) shows a compositional bias: polar residues. The disordered stretch occupies residues 839 to 971 (LLKSKSPNSM…GSLAKPSKRR (133 aa)).

This sequence belongs to the TRAFAC class myosin-kinesin ATPase superfamily. Kinesin family. KIN-14 subfamily.

The sequence is that of Kinesin-like protein KIN-14C from Oryza sativa subsp. japonica (Rice).